A 348-amino-acid polypeptide reads, in one-letter code: uncharacterized protein (348 aa).

The first 26 residues, 1-26, serve as a signal peptide directing secretion; that stretch reads MKKRIILLLAVIIAAAAAGVAFYVAK.

This is an uncharacterized protein from Bacillus subtilis (strain 168).